The chain runs to 134 residues: Profilin-3 (134 aa).

Residues Cys-13 and Cys-118 are joined by a disulfide bond. An Involved in PIP2 interaction motif is present at residues 84-100; sequence AVIRGKKGSGGITIKKT. The residue at position 114 (Thr-114) is a Phosphothreonine.

It belongs to the profilin family. Occurs in many kinds of cells as a complex with monomeric actin in a 1:1 ratio. Post-translationally, phosphorylated by MAP kinases.

It is found in the cytoplasm. The protein localises to the cytoskeleton. Its function is as follows. Binds to actin and affects the structure of the cytoskeleton. At high concentrations, profilin prevents the polymerization of actin, whereas it enhances it at low concentrations. The polypeptide is Profilin-3 (Olea europaea (Common olive)).